The following is a 556-amino-acid chain: 2-succinyl-5-enolpyruvyl-6-hydroxy-3-cyclohexene-1-carboxylate synthase (556 aa).

It belongs to the TPP enzyme family. MenD subfamily. Homodimer. The cofactor is Mg(2+). It depends on Mn(2+) as a cofactor. Requires thiamine diphosphate as cofactor.

The enzyme catalyses isochorismate + 2-oxoglutarate + H(+) = 5-enolpyruvoyl-6-hydroxy-2-succinyl-cyclohex-3-ene-1-carboxylate + CO2. Its pathway is quinol/quinone metabolism; 1,4-dihydroxy-2-naphthoate biosynthesis; 1,4-dihydroxy-2-naphthoate from chorismate: step 2/7. The protein operates within quinol/quinone metabolism; menaquinone biosynthesis. Catalyzes the thiamine diphosphate-dependent decarboxylation of 2-oxoglutarate and the subsequent addition of the resulting succinic semialdehyde-thiamine pyrophosphate anion to isochorismate to yield 2-succinyl-5-enolpyruvyl-6-hydroxy-3-cyclohexene-1-carboxylate (SEPHCHC). This is 2-succinyl-5-enolpyruvyl-6-hydroxy-3-cyclohexene-1-carboxylate synthase from Escherichia coli O17:K52:H18 (strain UMN026 / ExPEC).